The primary structure comprises 87 residues: Small ribosomal subunit protein uS19 (87 aa).

The protein belongs to the universal ribosomal protein uS19 family.

Protein S19 forms a complex with S13 that binds strongly to the 16S ribosomal RNA. In Mycoplasma pneumoniae (strain ATCC 29342 / M129 / Subtype 1) (Mycoplasmoides pneumoniae), this protein is Small ribosomal subunit protein uS19 (rpsS).